We begin with the raw amino-acid sequence, 119 residues long: Large ribosomal subunit protein P3 (119 aa).

Residues 81-119 (GAAAGAASGGAAAEAPKAEEKKEEEKEESEDDLGFSLFD) form a disordered region. Over residues 84–95 (AGAASGGAAAEA) the composition is skewed to low complexity.

The protein belongs to the eukaryotic ribosomal protein P1/P2 family. Phosphorylated.

In terms of biological role, plays an important role in the elongation step of protein synthesis. This is Large ribosomal subunit protein P3 from Oryza sativa subsp. japonica (Rice).